The sequence spans 65 residues: Large ribosomal subunit protein bL35 (65 aa).

This sequence belongs to the bacterial ribosomal protein bL35 family.

The protein is Large ribosomal subunit protein bL35 of Psychrobacter arcticus (strain DSM 17307 / VKM B-2377 / 273-4).